We begin with the raw amino-acid sequence, 249 residues long: tRNA (guanine-N(1)-)-methyltransferase (249 aa).

Residues G113 and 133–138 (IGDFVL) contribute to the S-adenosyl-L-methionine site.

It belongs to the RNA methyltransferase TrmD family. In terms of assembly, homodimer.

The protein resides in the cytoplasm. It carries out the reaction guanosine(37) in tRNA + S-adenosyl-L-methionine = N(1)-methylguanosine(37) in tRNA + S-adenosyl-L-homocysteine + H(+). Functionally, specifically methylates guanosine-37 in various tRNAs. The protein is tRNA (guanine-N(1)-)-methyltransferase of Aliivibrio salmonicida (strain LFI1238) (Vibrio salmonicida (strain LFI1238)).